The sequence spans 332 residues: Cytochrome c oxidase subunit 2 (332 aa).

An N-terminal signal peptide occupies residues 1–20 (MKIPGSVITLLIGVVITVVS). 2 helical membrane passes run 48-68 (MMTIATGLFLLVEGVLVYCLI) and 87-107 (VPLEILWTAIPTVIVFTLAVY). Histidine 214, cysteine 249, cysteine 253, and histidine 257 together coordinate Cu cation.

The protein belongs to the cytochrome c oxidase subunit 2 family. It depends on Cu cation as a cofactor.

It is found in the cell membrane. The catalysed reaction is 4 Fe(II)-[cytochrome c] + O2 + 8 H(+)(in) = 4 Fe(III)-[cytochrome c] + 2 H2O + 4 H(+)(out). Functionally, subunits I and II form the functional core of the enzyme complex. Electrons originating in cytochrome c are transferred via heme a and Cu(A) to the binuclear center formed by heme a3 and Cu(B). This chain is Cytochrome c oxidase subunit 2 (ctaC), found in Synechocystis sp. (strain ATCC 27184 / PCC 6803 / Kazusa).